Consider the following 39-residue polypeptide: Photosystem II reaction center protein L (39 aa).

A helical transmembrane segment spans residues 18–38 (SLYLGLLLVAVLGILFSSYFF).

It belongs to the PsbL family. PSII is composed of 1 copy each of membrane proteins PsbA, PsbB, PsbC, PsbD, PsbE, PsbF, PsbH, PsbI, PsbJ, PsbK, PsbL, PsbM, PsbT, PsbX, PsbY, PsbZ, Psb30/Ycf12, peripheral proteins PsbO, CyanoQ (PsbQ), PsbU, PsbV and a large number of cofactors. It forms dimeric complexes.

It is found in the cellular thylakoid membrane. Functionally, one of the components of the core complex of photosystem II (PSII). PSII is a light-driven water:plastoquinone oxidoreductase that uses light energy to abstract electrons from H(2)O, generating O(2) and a proton gradient subsequently used for ATP formation. It consists of a core antenna complex that captures photons, and an electron transfer chain that converts photonic excitation into a charge separation. This subunit is found at the monomer-monomer interface and is required for correct PSII assembly and/or dimerization. This is Photosystem II reaction center protein L from Rippkaea orientalis (strain PCC 8801 / RF-1) (Cyanothece sp. (strain PCC 8801)).